Reading from the N-terminus, the 87-residue chain is Probable Fe(2+)-trafficking protein (87 aa).

The protein belongs to the Fe(2+)-trafficking protein family.

Could be a mediator in iron transactions between iron acquisition and iron-requiring processes, such as synthesis and/or repair of Fe-S clusters in biosynthetic enzymes. The protein is Probable Fe(2+)-trafficking protein of Francisella tularensis subsp. novicida (strain U112).